Here is a 430-residue protein sequence, read N- to C-terminus: MGSTSTPPHVLIIGAGITGLALAQALRKHGVSFAVYERDPDPLHRGKGWGLTIHWSLDAFLRLLPQHLIDRLPETYVDPDAVAKGENGNFLLFDLRTGETKWKVPPAKRLRVSRERLRRLLMDGIDVQWNKTISSISQISETAVRCEFSDNSSAEGTLLVGCDGSRSKTRSLLCSLAGNETPVRSENYQLPVRLIGVSAALPSRIALKMRALDPFFLQAGDPATSNFFWFSFLDTPINNDREDRDTYECQILISWPYRKDGSNNIEIPCHNVDKIKLMHSLADGWVEPFCEVVQSIPEETEPKIISLEDWPTPPKGSWSNLGGTATLVGDSAHAMTMFRGEAGNHGILDVSNLLEALIPVLTSSPHSPAKTQEEVINEYEDEMTTRTRPAVLRSRKACLDAHDYPSITADSPLVARRGAFEDDDLEYLLN.

An N-terminal signal peptide occupies residues 1 to 23; sequence MGSTSTPPHVLIIGAGITGLALA. 9–37 lines the FAD pocket; it reads HVLIIGAGITGLALAQALRKHGVSFAVYE. Asn130 and Asn151 each carry an N-linked (GlcNAc...) asparagine glycan. 307 to 330 is an FAD binding site; that stretch reads LEDWPTPPKGSWSNLGGTATLVGD.

The cofactor is FAD.

The chain is Probable FAD-dependent monooxygenase from Arthroderma benhamiae (strain ATCC MYA-4681 / CBS 112371) (Trichophyton mentagrophytes).